Reading from the N-terminus, the 86-residue chain is Toxin CSTX-20 (86 aa).

Expressed by the venom gland.

The protein localises to the secreted. This Cupiennius salei (American wandering spider) protein is Toxin CSTX-20.